Consider the following 607-residue polypeptide: UvrABC system protein C (607 aa).

The 79-residue stretch at 16–94 folds into the GIY-YIG domain; that stretch reads GRPGVYRMFD…IKEWRPPYNI (79 aa). The UVR domain maps to 203-238; it reads HALTNELSTAMEEAAINLEFERAAELRDQIALLRRV.

It belongs to the UvrC family. As to quaternary structure, interacts with UvrB in an incision complex.

The protein localises to the cytoplasm. The UvrABC repair system catalyzes the recognition and processing of DNA lesions. UvrC both incises the 5' and 3' sides of the lesion. The N-terminal half is responsible for the 3' incision and the C-terminal half is responsible for the 5' incision. This chain is UvrABC system protein C, found in Pseudomonas fluorescens (strain Pf0-1).